A 646-amino-acid polypeptide reads, in one-letter code: Heat shock 70 kDa protein (646 aa).

Over residues 613 to 632 (GGAPGGMPGAAPGGFPGGAP) the composition is skewed to gly residues. The disordered stretch occupies residues 613 to 646 (GGAPGGMPGAAPGGFPGGAPGSNDNEGPTVEEVD).

Belongs to the heat shock protein 70 family.

The polypeptide is Heat shock 70 kDa protein (hsps-1) (Neurospora crassa (strain ATCC 24698 / 74-OR23-1A / CBS 708.71 / DSM 1257 / FGSC 987)).